Here is a 122-residue protein sequence, read N- to C-terminus: Biogenesis of lysosome-related organelles complex 1 subunit CNL1 (122 aa).

A compositionally biased stretch (basic and acidic residues) spans 1-10 (MQDNSSHSRE). Residues 1–21 (MQDNSSHSRESASAGDDPLGI) form a disordered region. Positions 63-95 (ENTIDKNIAKFKELLEKCDTLENHYEMLNQLAI) form a coiled coil.

The protein belongs to the BLOC1S4 family. As to quaternary structure, component of the biogenesis of lysosome-related organelles complex-1 (BLOC-1) composed of at least BLI1, BLS1, CNL1, KXD1, SNN1 and VAB2.

It is found in the cytoplasm. Functionally, component of the biogenesis of lysosome-related organelles complex-1 (BLOC-1), a complex that is involved in endosomal cargo sorting. The polypeptide is Biogenesis of lysosome-related organelles complex 1 subunit CNL1 (CNL1) (Saccharomyces cerevisiae (strain ATCC 204508 / S288c) (Baker's yeast)).